Here is a 204-residue protein sequence, read N- to C-terminus: Tat proofreading chaperone DmsD (204 aa).

This sequence belongs to the TorD/DmsD family. DmsD subfamily.

Its function is as follows. Required for biogenesis/assembly of DMSO reductase, but not for the interaction of the DmsA signal peptide with the Tat system. May be part of a chaperone cascade complex that facilitates a folding-maturation pathway for the substrate protein. In Salmonella paratyphi A (strain ATCC 9150 / SARB42), this protein is Tat proofreading chaperone DmsD.